Reading from the N-terminus, the 123-residue chain is UPF0738 protein BcerKBAB4_1107 (123 aa).

The protein belongs to the UPF0738 family.

This chain is UPF0738 protein BcerKBAB4_1107, found in Bacillus mycoides (strain KBAB4) (Bacillus weihenstephanensis).